The primary structure comprises 387 residues: 8-amino-7-oxononanoate synthase (387 aa).

Residue R19 coordinates substrate. Position 106 to 107 (106 to 107 (GY)) interacts with pyridoxal 5'-phosphate. Position 131 (H131) interacts with substrate. Pyridoxal 5'-phosphate is bound by residues S177, H205, and T236. The residue at position 239 (K239) is an N6-(pyridoxal phosphate)lysine. Substrate is bound at residue T353.

This sequence belongs to the class-II pyridoxal-phosphate-dependent aminotransferase family. BioF subfamily. In terms of assembly, homodimer. The cofactor is pyridoxal 5'-phosphate.

The catalysed reaction is 6-carboxyhexanoyl-[ACP] + L-alanine + H(+) = (8S)-8-amino-7-oxononanoate + holo-[ACP] + CO2. It participates in cofactor biosynthesis; biotin biosynthesis. Its function is as follows. Catalyzes the decarboxylative condensation of pimeloyl-[acyl-carrier protein] and L-alanine to produce 8-amino-7-oxononanoate (AON), [acyl-carrier protein], and carbon dioxide. This is 8-amino-7-oxononanoate synthase from Nitrosomonas europaea (strain ATCC 19718 / CIP 103999 / KCTC 2705 / NBRC 14298).